Consider the following 125-residue polypeptide: Large ribosomal subunit protein bL12 (125 aa).

Belongs to the bacterial ribosomal protein bL12 family. In terms of assembly, homodimer. Part of the ribosomal stalk of the 50S ribosomal subunit. Forms a multimeric L10(L12)X complex, where L10 forms an elongated spine to which 2 to 4 L12 dimers bind in a sequential fashion. Binds GTP-bound translation factors.

Functionally, forms part of the ribosomal stalk which helps the ribosome interact with GTP-bound translation factors. Is thus essential for accurate translation. In Campylobacter lari (strain RM2100 / D67 / ATCC BAA-1060), this protein is Large ribosomal subunit protein bL12.